A 738-amino-acid chain; its full sequence is Coiled-coil domain-containing protein 142 (738 aa).

The segment at 1 to 34 (MARASSSSGPLPPLANVPSSWAQPVGAGEERDEG) is disordered. A coiled-coil region spans residues 69 to 92 (ALQRLRATLLRLHREREQLLRARD). The tract at residues 682 to 704 (LSTLGGGGRGGGGGGGPGPSPEA) is disordered. Residues 685–698 (LGGGGRGGGGGGGP) show a composition bias toward gly residues.

The polypeptide is Coiled-coil domain-containing protein 142 (Ccdc142) (Mus musculus (Mouse)).